Reading from the N-terminus, the 1038-residue chain is Eukaryotic translation initiation factor 3 subunit A (1038 aa).

Residues 92-121 (LKKFIELAEKKVTEAQAKADEIQSSLESAA) adopt a coiled-coil conformation. A PCI domain is found at 339 to 523 (MTKAVSFVLL…GVLTFDTDVF (185 aa)). The stretch at 611 to 899 (IDKKKEAATD…QKQREEEAEA (289 aa)) forms a coiled coil. Composition is skewed to basic and acidic residues over residues 621–632 (ALQRKQREEETR) and 800–901 (RHEE…EARR). Disordered regions lie at residues 621-641 (ALQRKQREEETRKRIRTQQLQ) and 800-1038 (RHEE…QQGQ). 2 stretches are compositionally biased toward low complexity: residues 943–952 (KEAAGGAAPE) and 976–993 (GASAAAPAAPPSNGAAPS). Polar residues predominate over residues 1002–1019 (DSGSSTPPSRTQTPATTS).

The protein belongs to the eIF-3 subunit A family. Component of the eukaryotic translation initiation factor 3 (eIF-3) complex.

It localises to the cytoplasm. Its function is as follows. RNA-binding component of the eukaryotic translation initiation factor 3 (eIF-3) complex, which is involved in protein synthesis of a specialized repertoire of mRNAs and, together with other initiation factors, stimulates binding of mRNA and methionyl-tRNAi to the 40S ribosome. The eIF-3 complex specifically targets and initiates translation of a subset of mRNAs involved in cell proliferation. The polypeptide is Eukaryotic translation initiation factor 3 subunit A (tif32) (Aspergillus oryzae (strain ATCC 42149 / RIB 40) (Yellow koji mold)).